The following is a 1120-amino-acid chain: ELKS/Rab6-interacting/CAST family member 1 (1120 aa).

The disordered stretch occupies residues 1–54 (MYGSARSVGKVEPSSQSPGRSPRLPRSPRLGHRRTNSTGGSSGNSVGGGSGKTL). N6-acetyllysine is present on Lys10. Low complexity predominate over residues 13-28 (PSSQSPGRSPRLPRSP). 3 positions are modified to phosphoserine: Ser17, Ser21, and Ser37. Thr38 carries the post-translational modification Phosphothreonine. The segment covering 40–51 (GSSGNSVGGGSG) has biased composition (gly residues). Ser55, Ser75, Ser94, Ser824, Leu965, and Ser1009 each carry phosphoserine. Residues 144-992 (RQARDNTIMD…RMKLMADNYE (849 aa)) are a coiled coil. The segment covering 801–824 (KHKEQVEKKKSAQMLEEARRREDS) has biased composition (basic and acidic residues). Positions 801–840 (KHKEQVEKKKSAQMLEEARRREDSLSDSSQQLQDSLRKKD) are disordered. At Thr1050 the chain carries Phosphothreonine. One can recognise an FIP-RBD domain in the interval 1050-1112 (TPPASYNADG…DHCPDILEQV (63 aa)). The stretch at 1060-1104 (EQAAWENELQQMTQEQLQNELEKVEGDNAELQEFANTILQQIADH) forms a coiled coil.

In terms of assembly, interacts with the GTB-bound forms of RAB6A isoform 1 and isoform 2 and with RAB6B. The interaction was strongest with RAB6B, followed by RAB6A isoform 2 and weakest with RAB6A isoform 1. Part of a complex with CHUK, IKBKB and IKBKG. Interacts with CHUK, IKBKB and IKBKG. The interaction with IKBKG is independent of CHUK and IKBKB. Interacts with NFKBIA. Isoform 2 interacts through its C-terminus with the PDZ domains of RIMS1 and RIMS2. Interacts with ERC2/CAST1. Interacts with SDCCAG8. Part of a cortical microtubule stabilization complex (CMSC) composed of KANK1, PPFIA1, PPFIBP1, ERC1/ELKS, PHLDB2/LL5beta, CLASPs, KIF21A and possibly additional interactors; within CMSCs KANK1 and PHLDB2/LL5beta appear to be the core components for targeting of microtubule-binding proteins KIF21A and CLASPs, whereas PPFIA1, PPFIBP1 and ERC1/ELKS serve as scaffolds for protein clustering. As to expression, widely expressed.

The protein resides in the cytoplasm. Its subcellular location is the cytoskeleton. It localises to the microtubule organizing center. It is found in the centrosome. The protein localises to the membrane. The protein resides in the golgi apparatus membrane. Its subcellular location is the presynaptic active zone. It localises to the cell projection. It is found in the podosome. Functionally, regulatory subunit of the IKK complex. Probably recruits IkappaBalpha/NFKBIA to the complex. May be involved in the organization of the cytomatrix at the nerve terminals active zone (CAZ) which regulates neurotransmitter release. May be involved in vesicle trafficking at the CAZ. May be involved in Rab-6 regulated endosomes to Golgi transport. This chain is ELKS/Rab6-interacting/CAST family member 1, found in Mus musculus (Mouse).